The primary structure comprises 275 residues: Tryptase (275 aa).

The signal sequence occupies residues 1–20; that stretch reads MLNLLVLALPLLVSLVHTAP. Positions 21–30 are cleaved as a propeptide — activation peptide; sequence APGQALERAG. The 242-residue stretch at 31–272 folds into the Peptidase S1 domain; the sequence is IVGGKEAPGH…YLDWIHQCIP (242 aa). Cysteine 59 and cysteine 75 are oxidised to a cystine. Active-site charge relay system residues include histidine 74 and aspartate 121. A glycan (N-linked (GlcNAc...) asparagine) is linked at asparagine 132. Intrachain disulfides connect cysteine 155–cysteine 230, cysteine 188–cysteine 211, and cysteine 220–cysteine 248. The active-site Charge relay system is the serine 224. A glycan (N-linked (GlcNAc...) asparagine) is linked at asparagine 233.

The protein belongs to the peptidase S1 family. Tryptase subfamily. Homotetramer.

Its subcellular location is the secreted. The enzyme catalyses Preferential cleavage: Arg-|-Xaa, Lys-|-Xaa, but with more restricted specificity than trypsin.. In terms of biological role, tryptase is the major neutral protease present in mast cells and is secreted upon the coupled activation-degranulation response of this cell type. The protein is Tryptase (MCT7) of Sus scrofa (Pig).